The primary structure comprises 99 residues: Leydig cell tumor 10 kDa protein homolog (99 aa).

The segment at 1–36 (MAQGQRKFQAHKPAKSKTAAAASEKNRGPRKGGRVI) is disordered.

Belongs to the UPF0390 family.

Its function is as follows. May have a potential role in hypercalcemia of malignancy. The protein is Leydig cell tumor 10 kDa protein homolog (C19orf53) of Homo sapiens (Human).